Here is a 276-residue protein sequence, read N- to C-terminus: Light-independent protochlorophyllide reductase iron-sulfur ATP-binding protein (276 aa).

ATP-binding positions include 12 to 17 (GIGKST) and Lys-41. Ser-16 contributes to the Mg(2+) binding site. [4Fe-4S] cluster-binding residues include Cys-97 and Cys-131. 182–183 (NR) serves as a coordination point for ATP.

Belongs to the NifH/BchL/ChlL family. Homodimer. Protochlorophyllide reductase is composed of three subunits; BchL, BchN and BchB. Requires [4Fe-4S] cluster as cofactor.

The catalysed reaction is chlorophyllide a + oxidized 2[4Fe-4S]-[ferredoxin] + 2 ADP + 2 phosphate = protochlorophyllide a + reduced 2[4Fe-4S]-[ferredoxin] + 2 ATP + 2 H2O. It participates in porphyrin-containing compound metabolism; bacteriochlorophyll biosynthesis (light-independent). In terms of biological role, component of the dark-operative protochlorophyllide reductase (DPOR) that uses Mg-ATP and reduced ferredoxin to reduce ring D of protochlorophyllide (Pchlide) to form chlorophyllide a (Chlide). This reaction is light-independent. The L component serves as a unique electron donor to the NB-component of the complex, and binds Mg-ATP. In Chlorobium chlorochromatii (strain CaD3), this protein is Light-independent protochlorophyllide reductase iron-sulfur ATP-binding protein.